Reading from the N-terminus, the 862-residue chain is Cell surface glycoprotein (862 aa).

A signal peptide spans 1-34 (MTDTQQKIKAVLLTVLMVTSVFAATIAFSGAAAA). Disordered regions lie at residues 35–60 (SERG…SAGN), 101–126 (ILLE…EGTE), and 200–220 (VNTN…DRDD). Residues 43-57 (YTTGPTDGNQDNVDS) are compositionally biased toward polar residues. The span at 206-220 (NDDHPNPAADGDRDD) shows a compositional bias: basic and acidic residues. N-linked (GlcNAc...) asparagine glycosylation is found at asparagine 442, asparagine 520, asparagine 550, asparagine 702, and asparagine 761. Residues 752–838 (LSDENVEPGN…TEEATTEATG (87 aa)) form a disordered region. Over residues 784-801 (SLEEEQPATDTPEPDTDT) the composition is skewed to acidic residues. Residues 802-815 (PEPATDTPEPATDT) show a composition bias toward low complexity. Positions 816 to 833 (PEPDTDTPEPDTETEEAT) are enriched in acidic residues. The chain crosses the membrane as a helical span at residues 838 to 858 (GPGFTAAIALIALVAAALLAV). The short motif at 839–841 (PGF) is the PGF sorting signal element.

It belongs to the halobacterial S-layer protein family. Post-translationally, glycosylated. In terms of processing, cleaved by the archaeosortase ArtA at the C-terminus, with removal of a short hydrophobic segment. Lipidation.

It is found in the secreted. Its subcellular location is the cell wall. The protein resides in the S-layer. The protein localises to the cell membrane. In terms of biological role, S-layer protein. The S-layer is a paracrystalline mono-layered assembly of proteins which coat the surface of the cell. In Haloarcula japonica (strain ATCC 49778 / DSM 6131 / JCM 7785 / NBRC 101032 / NCIMB 13157 / TR-1), this protein is Cell surface glycoprotein.